A 50-amino-acid chain; its full sequence is Protein PsbN (50 aa).

The chain crosses the membrane as a helical span at residues 14-34; sequence IAVTILALLLALTGFGLWTAF.

Belongs to the PsbN family.

The protein localises to the cellular thylakoid membrane. In terms of biological role, may play a role in photosystem I and II biogenesis. This is Protein PsbN from Prochlorococcus marinus (strain MIT 9301).